An 88-amino-acid chain; its full sequence is MANTSSAKKATRKIARRTAVNKSRRTQMRGSVRIVEEAIASGDRDAALKAMARAEPELMRAAQRNIIHRNAASRKVSRLTHSIAKLAK.

Residues 1-28 (MANTSSAKKATRKIARRTAVNKSRRTQM) are disordered.

Functionally, binds directly to 16S ribosomal RNA. The sequence is that of Small ribosomal subunit protein bS20 from Rhodopseudomonas palustris (strain ATCC BAA-98 / CGA009).